The primary structure comprises 62 residues: Large ribosomal subunit protein eL24 (62 aa).

Positions 6, 9, 32, and 36 each coordinate Zn(2+). The C4-type zinc finger occupies 6 to 36 (CSFCEGTIEPGCGKKYVKKDGSVMHFCSSKC).

This sequence belongs to the eukaryotic ribosomal protein eL24 family. Part of the 50S ribosomal subunit. Forms a cluster with proteins L3 and L14. Zn(2+) serves as cofactor.

Binds to the 23S rRNA. This is Large ribosomal subunit protein eL24 from Methanococcus maripaludis (strain C7 / ATCC BAA-1331).